The sequence spans 445 residues: Methyl-CpG-binding domain protein 4-like protein (445 aa).

D429 is an active-site residue.

As to expression, isoform 1 and isoform 4: Expressed in leaves and flowers, but not in roots or stems.

It localises to the nucleus. Functionally, monofunctional DNA glycosylase targeting U:G and T:G mispairs. Excises uracil derivatives and exhibits a preference for a CpG sequence context, irrespective of the methylation status of the complementary strand. The activity follows a biphasic kinetics, with an initial burst of product accumulation followed by a slower phase. Specifically binds its reaction product. Triggers the base excision repair (BER) pathway. In Arabidopsis thaliana (Mouse-ear cress), this protein is Methyl-CpG-binding domain protein 4-like protein.